A 518-amino-acid polypeptide reads, in one-letter code: Glucan 1,4-alpha-maltohexaosidase (518 aa).

Positions 1–33 (MKMRTGKKGFLSILLAFLLVITSIPFTLVDVEA) are cleaved as a signal peptide. Positions 139, 196, 219, 221, 232, 238, 240, and 242 each coordinate Ca(2+). Na(+) is bound at residue Asp196. Residues Asp221, Asp232, and Asp238 each contribute to the Na(+) site. Asp269 (nucleophile) is an active-site residue. Position 273 (His273) interacts with Ca(2+). Glu299 serves as the catalytic Proton donor.

It belongs to the glycosyl hydrolase 13 family. The cofactor is Ca(2+). Na(+) serves as cofactor.

It is found in the secreted. The catalysed reaction is Hydrolysis of (1-&gt;4)-alpha-D-glucosidic linkages in amylaceous polysaccharides, to remove successive maltohexaose residues from the non-reducing chain ends.. Its pathway is glycan degradation; starch degradation. The protein is Glucan 1,4-alpha-maltohexaosidase of Bacillus sp. (strain 707).